Here is a 166-residue protein sequence, read N- to C-terminus: Endoribonuclease YbeY (166 aa).

Positions 126, 130, and 136 each coordinate Zn(2+).

This sequence belongs to the endoribonuclease YbeY family. The cofactor is Zn(2+).

Its subcellular location is the cytoplasm. Single strand-specific metallo-endoribonuclease involved in late-stage 70S ribosome quality control and in maturation of the 3' terminus of the 16S rRNA. This Laribacter hongkongensis (strain HLHK9) protein is Endoribonuclease YbeY.